The following is a 132-amino-acid chain: MSMTDNVADMLTRIRNAYKSKLINVSFPSSKIKTSILDVLQKEGYIKDYVTTQKNNISYTEVALKYSVNGDASICEIHRVSKPGKRVYSAIKDLKGYYNNMGIYILSTPYGVMSDREAHIKNVGGEVICKVF.

Belongs to the universal ribosomal protein uS8 family. As to quaternary structure, part of the 30S ribosomal subunit. Contacts proteins S5 and S12.

In terms of biological role, one of the primary rRNA binding proteins, it binds directly to 16S rRNA central domain where it helps coordinate assembly of the platform of the 30S subunit. This Rickettsia felis (strain ATCC VR-1525 / URRWXCal2) (Rickettsia azadi) protein is Small ribosomal subunit protein uS8.